A 413-amino-acid chain; its full sequence is Palmitoyltransferase ZDHHC6 (413 aa).

Residues Met1–Pro24 lie on the Cytoplasmic side of the membrane. Residues Ile25–Trp45 traverse the membrane as a helical segment. The Lumenal segment spans residues Tyr46–Asn57. Residues Phe58–Val78 form a helical membrane-spanning segment. Topologically, residues Gly79–Ser143 are cytoplasmic. The 51-residue stretch at Gln99 to Leu149 folds into the DHHC domain. The active-site S-palmitoyl cysteine intermediate is Cys129. A helical membrane pass occupies residues Phe144–Met164. Topologically, residues Thr165–Thr205 are lumenal. Residues Thr206–Ile226 traverse the membrane as a helical segment. The Cytoplasmic portion of the chain corresponds to Gln227–Arg413. An SH3 domain is found at Val313–Cys398. 3 S-palmitoyl cysteine lipidation sites follow: Cys328, Cys329, and Cys343. Residues Lys410–Arg413 carry the Di-lysine motif motif.

The protein belongs to the DHHC palmitoyltransferase family. As to quaternary structure, homooligomerizes. Interacts with SELENOK. Palmitoylated at 3 different sites by ZDHHC16. The combination of the different palmitoylation events strongly affects the quaternary assembly of ZDHHC6, its localization, stability and function. Palmitoylation at Cys-328 accelerates the turnover of ZDHHC6. Depalmitoylated by LYPLA2.

The protein localises to the endoplasmic reticulum membrane. The catalysed reaction is L-cysteinyl-[protein] + hexadecanoyl-CoA = S-hexadecanoyl-L-cysteinyl-[protein] + CoA. The enzyme catalyses L-cysteinyl-[protein] + octadecanoyl-CoA = S-octadecanoyl-L-cysteinyl-[protein] + CoA. In terms of biological role, endoplasmic reticulum palmitoyl acyltransferase that mediates palmitoylation of proteins such as AMFR, CALX, ITPR1 and TFRC. Palmitoylates calnexin (CALX), which is required for its association with the ribosome-translocon complex and efficient folding of glycosylated proteins. Mediates palmitoylation of AMFR, promoting AMFR distribution to the peripheral endoplasmic reticulum. Together with SELENOK, palmitoylates ITPR1 in immune cells, leading to regulate ITPR1 stability and function. Stearoyltransferase that mediates stearoylation of TFRC to inhibit TFRC-mediated activation of the JNK pathway and mitochondrial fragmentation. The polypeptide is Palmitoyltransferase ZDHHC6 (Homo sapiens (Human)).